The sequence spans 57 residues: Small ribosomal subunit protein bS21 (57 aa).

Positions 35 to 57 (REFYEKPSVRRKKKSEAARKRKY) are disordered. Basic residues predominate over residues 43 to 57 (VRRKKKSEAARKRKY).

This sequence belongs to the bacterial ribosomal protein bS21 family.

This is Small ribosomal subunit protein bS21 from Bacillus licheniformis (strain ATCC 14580 / DSM 13 / JCM 2505 / CCUG 7422 / NBRC 12200 / NCIMB 9375 / NCTC 10341 / NRRL NRS-1264 / Gibson 46).